The chain runs to 822 residues: Glycerol-3-phosphate acyltransferase (822 aa).

The short motif at 306–311 is the HXXXXD motif element; that stretch reads CHRSHM. Residues 803-822 are disordered; the sequence is ASSSAEMEAESQAVEETTQE.

This sequence belongs to the GPAT/DAPAT family.

Its subcellular location is the cell inner membrane. It catalyses the reaction sn-glycerol 3-phosphate + an acyl-CoA = a 1-acyl-sn-glycero-3-phosphate + CoA. Its pathway is phospholipid metabolism; CDP-diacylglycerol biosynthesis; CDP-diacylglycerol from sn-glycerol 3-phosphate: step 1/3. This is Glycerol-3-phosphate acyltransferase from Pectobacterium carotovorum subsp. carotovorum (strain PC1).